Here is a 219-residue protein sequence, read N- to C-terminus: MLIFSVLMYLGLLLAGASALPNGLSPRNNAFCAGFGLSCKWECWCTAHGTGNELRYATAAGCGDHLSKSYYDARAGHCLFSDDLRNQFYSHCSSLNNNMSCRSLSKRTIQDSATDTVDLGAELHRDDPPPTASDIGKRGKRPRPVMCQCVDTTNGGVRLDAVTRAACSIDSFIDGYYTEKDGFCRAKYSWDLFTSGQFYQACLRYSHAGTNCQPDPQYE.

A signal peptide spans 1-19 (MLIFSVLMYLGLLLAGASA). The propeptide occupies 20-27 (LPNGLSPR). Intrachain disulfides connect Cys32–Cys39, Cys43–Cys101, Cys45–Cys92, and Cys62–Cys78. N-linked (GlcNAc...) asparagine; by host glycosylation occurs at Asn98. Residues 106-138 (KRTIQDSATDTVDLGAELHRDDPPPTASDIGKR) constitute a propeptide that is removed on maturation. Residues 120–142 (GAELHRDDPPPTASDIGKRGKRP) form a disordered region.

As to quaternary structure, heterodimer of two small polypeptides that are not covalently linked.

The protein resides in the secreted. This protein is lethal to sensitive cells of the same or related species. The KP6 alpha subunit is known to recognize some cellular receptors before interaction of the complex with KP6 beta, precipitating cell death. This chain is KP6 killer toxin, found in Ustilago maydis P6 virus (UmV6).